Consider the following 324-residue polypeptide: Beta-ketoacyl-[acyl-carrier-protein] synthase III (324 aa).

Residues Cys-112 and His-249 contribute to the active site. The interval 250 to 254 (QANRR) is ACP-binding. Residue Asn-279 is part of the active site.

This sequence belongs to the thiolase-like superfamily. FabH family. Homodimer.

Its subcellular location is the cytoplasm. It carries out the reaction malonyl-[ACP] + acetyl-CoA + H(+) = 3-oxobutanoyl-[ACP] + CO2 + CoA. It participates in lipid metabolism; fatty acid biosynthesis. In terms of biological role, catalyzes the condensation reaction of fatty acid synthesis by the addition to an acyl acceptor of two carbons from malonyl-ACP. Catalyzes the first condensation reaction which initiates fatty acid synthesis and may therefore play a role in governing the total rate of fatty acid production. Possesses both acetoacetyl-ACP synthase and acetyl transacylase activities. Its substrate specificity determines the biosynthesis of branched-chain and/or straight-chain of fatty acids. The chain is Beta-ketoacyl-[acyl-carrier-protein] synthase III from Streptococcus pyogenes serotype M2 (strain MGAS10270).